The chain runs to 84 residues: MGGFSIWHWLIVLLIVVMVFGTKKLRNMGSDLGGAVKGFKDGMKDGGQSPADEKPVVPASQVTNAQAADKAERNTIDVEARQKS.

Residues 1-21 form a helical membrane-spanning segment; sequence MGGFSIWHWLIVLLIVVMVFG. The segment at 40-84 is disordered; that stretch reads KDGMKDGGQSPADEKPVVPASQVTNAQAADKAERNTIDVEARQKS. Positions 69 to 84 are enriched in basic and acidic residues; it reads DKAERNTIDVEARQKS.

The protein belongs to the TatA/E family. In terms of assembly, the Tat system comprises two distinct complexes: a TatABC complex, containing multiple copies of TatA, TatB and TatC subunits, and a separate TatA complex, containing only TatA subunits. Substrates initially bind to the TatABC complex, which probably triggers association of the separate TatA complex to form the active translocon.

It is found in the cell inner membrane. Functionally, part of the twin-arginine translocation (Tat) system that transports large folded proteins containing a characteristic twin-arginine motif in their signal peptide across membranes. TatA could form the protein-conducting channel of the Tat system. This is Sec-independent protein translocase protein TatA from Polaromonas naphthalenivorans (strain CJ2).